A 357-amino-acid polypeptide reads, in one-letter code: Protein-L-isoaspartate O-methyltransferase domain-containing protein 1 (357 aa).

The N-myristoyl glycine moiety is linked to residue G2. The active site involves S64. 3 adoMet binding motif regions span residues 85-94 (LNLGSGTGYL), 160-164 (YDRIY), and 181-191 (LKVGGILVMPI). Positions 240–250 (VRNLQDLARIY) are BC-box. The tract at residues 299–331 (PLDSEEDEKMEEDSKEEEEKEHIEAMKREEPPQ) is disordered. The span at 301–317 (DSEEDEKMEEDSKEEEE) shows a compositional bias: acidic residues. Residues 318–331 (KEHIEAMKREEPPQ) are compositionally biased toward basic and acidic residues. The tract at residues 341–344 (LPLP) is CUL-box.

It belongs to the methyltransferase superfamily. L-isoaspartyl/D-aspartyl protein methyltransferase family. Component of the probable ECS(PCMTD1) E3 ubiquitin-protein ligase complex, at least composed of CUL5, ELOB, ELOC, RBX2 and PCMTD1. Interacts (via the BC-box) with ELOB and ELOC; the interaction is direct and stabilizes PCMTD1.

It localises to the cytoplasm. The protein localises to the membrane. Functionally, substrate recognition component of an ECS (Elongin BC-CUL5-SOCS-box protein) E3 ubiquitin ligase complex which mediates the ubiquitination and subsequent proteasomal degradation of target proteins. Specifically binds to the methyltransferase cofactor S-adenosylmethionine (AdoMet) via the N-terminal AdoMet binding motif, but does not display methyltransferase activity. May provide an alternate maintenance pathway for modified proteins by acting as a damage-specific E3 ubiquitin ligase adaptor protein. The polypeptide is Protein-L-isoaspartate O-methyltransferase domain-containing protein 1 (Pcmtd1) (Mus musculus (Mouse)).